Reading from the N-terminus, the 719-residue chain is Ferric reductase transmembrane component 4 (719 aa).

Residues 1-18 form the signal peptide; sequence MLLVHIISFLLFFQLSAA. Over 19–156 the chain is Extracellular; that stretch reads KAPPSKTSLI…YGYYYNHDIP (138 aa). Asparagine 51, asparagine 80, asparagine 101, asparagine 113, asparagine 127, and asparagine 135 each carry an N-linked (GlcNAc...) asparagine glycan. The chain crosses the membrane as a helical span at residues 157–177; that stretch reads YYFGGIICAYFVGVMLLAGLI. Over 178-228 the chain is Cytoplasmic; the sequence is RFLNYTPIKKIMFQQKLVNYVRGYTTLPTLYEKHAEPFSYLKVITGYLPTR. The helical transmembrane segment at 229 to 249 threads the bilayer; that stretch reads FETLVILGYLILHTIFMAYKY. Residues 250-267 lie on the Extracellular side of the membrane; the sequence is QYDPYHIIFAAHRAEVAH. Residues 268–288 traverse the membrane as a helical segment; that stretch reads FVAYRSGILSFAHLPLIVLFA. Residues 273 to 407 form the Ferric oxidoreductase domain; it reads SGILSFAHLP…SGIEWIYAAI (135 aa). Topologically, residues 289 to 304 are cytoplasmic; the sequence is GRNNFLQLISGLKHTS. A helical transmembrane segment spans residues 305-325; that stretch reads FIVFHKWLGRMMFLDAIIHAA. Heme is bound by residues histidine 309 and histidine 323. The Extracellular portion of the chain corresponds to 326 to 346; sequence GFTNYYLYYKKWNTVRLRVYW. Residues 347–367 traverse the membrane as a helical segment; that stretch reads KFGIATTCLAGMLIFFSIAAF. Over 368-373 the chain is Cytoplasmic; sequence RRHYYE. Residues 374-394 traverse the membrane as a helical segment; that stretch reads TFMALHIVFAALFLYTCWEHV. Heme contacts are provided by histidine 379 and histidine 393. Threonine 395 is a topological domain (extracellular). The helical transmembrane segment at 396-416 threads the bilayer; sequence NFSGIEWIYAAIAIWGVDRIV. Residues 408 to 527 form the FAD-binding FR-type domain; that stretch reads AIWGVDRIVR…EGPYGSKSTA (120 aa). The Cytoplasmic portion of the chain corresponds to 417–719; sequence RITRIALLGF…IEYLEEYQAW (303 aa). 472–478 lines the FAD pocket; sequence HPFTVMD. 519–522 contributes to the NADP(+) binding site; it reads GPYG. Composition is skewed to polar residues over residues 606–618 and 625–643; these read EKIS…NGET and SSLS…TELP. Residues 606–643 are disordered; it reads EKISSNEVKNGETTAEKAPSSLSNSEKAPSESENTELP. Residue 685-686 participates in NADP(+) binding; the sequence is CG.

It belongs to the ferric reductase (FRE) family. Requires FAD as cofactor.

It is found in the cell membrane. It carries out the reaction 2 a Fe(II)-siderophore + NADP(+) + H(+) = 2 a Fe(III)-siderophore + NADPH. Functionally, siderophore-iron reductase responsible for reducing extracellular iron prior to import. Catalyzes the reductive uptake of Fe(3+) bound to dihydroxamate rhodotorulic acid. Fe(3+) is reduced to Fe(2+), which then dissociates from the siderophore and can be imported by the high-affinity Fe(2+) transport complex in the plasma membrane. The protein is Ferric reductase transmembrane component 4 (FRE4) of Saccharomyces cerevisiae (strain ATCC 204508 / S288c) (Baker's yeast).